The primary structure comprises 287 residues: U-megalopygitoxin(8)-Mo12 (287 aa).

Residues Met1–Gly17 form the signal peptide. Position 284 is a histidine amide (His284).

Belongs to the megalysin family. In terms of processing, contains 2 disulfide bonds. In terms of tissue distribution, expressed by the venom apparatus.

Its subcellular location is the secreted. The protein resides in the target cell membrane. Its function is as follows. May function as a large pore-forming protein. In Megalopyge opercularis (Southern flannel moth), this protein is U-megalopygitoxin(8)-Mo12.